The chain runs to 118 residues: Large ribosomal subunit protein bL20 (118 aa).

Belongs to the bacterial ribosomal protein bL20 family.

In terms of biological role, binds directly to 23S ribosomal RNA and is necessary for the in vitro assembly process of the 50S ribosomal subunit. It is not involved in the protein synthesizing functions of that subunit. This is Large ribosomal subunit protein bL20 from Oceanobacillus iheyensis (strain DSM 14371 / CIP 107618 / JCM 11309 / KCTC 3954 / HTE831).